Consider the following 310-residue polypeptide: Manganese ABC transporter substrate-binding lipoprotein scaA (310 aa).

A signal peptide spans 1 to 19 (MKKCRFLVLLLLAFVGLAA). Cysteine 20 is lipidated: N-palmitoyl cysteine. Cysteine 20 carries S-diacylglycerol cysteine lipidation. Positions 68, 140, 206, and 281 each coordinate Mn(2+).

The protein belongs to the bacterial solute-binding protein 9 family. Lipoprotein receptor antigen (Lrai) subfamily. The complex is composed of two ATP-binding proteins (ScaC), two transmembrane proteins (ScaB) and a solute-binding protein (ScaA).

It is found in the cell membrane. Part of ATP-binding cassette (ABC) transport system ScaABC involved in manganese import. Essential for growth under Mn(2+)-limiting conditions. Also acts as an adhesin which is involved on adherence to extracellular matrix. It is an important factor in pathogenesis and infection. This chain is Manganese ABC transporter substrate-binding lipoprotein scaA, found in Streptococcus gordonii.